The chain runs to 279 residues: Ribonuclease Z (279 aa).

The Zn(2+) site is built by H61, H63, D65, H66, H153, D176, and H240. D65 functions as the Proton acceptor in the catalytic mechanism.

Belongs to the RNase Z family. Homodimer. The cofactor is Zn(2+).

It carries out the reaction Endonucleolytic cleavage of RNA, removing extra 3' nucleotides from tRNA precursor, generating 3' termini of tRNAs. A 3'-hydroxy group is left at the tRNA terminus and a 5'-phosphoryl group is left at the trailer molecule.. In terms of biological role, zinc phosphodiesterase, which displays some tRNA 3'-processing endonuclease activity. Probably involved in tRNA maturation, by removing a 3'-trailer from precursor tRNA. In Mycobacterium marinum (strain ATCC BAA-535 / M), this protein is Ribonuclease Z.